The primary structure comprises 582 residues: Aspartate--tRNA ligase (582 aa).

L-aspartate is bound at residue glutamate 174. Positions 198–201 (QITK) are aspartate. Position 220 (arginine 220) interacts with L-aspartate. ATP is bound by residues 220–222 (RDE) and glutamine 229. Histidine 443 is a binding site for L-aspartate. Glutamate 477 serves as a coordination point for ATP. Residue arginine 484 coordinates L-aspartate. 529–532 (GLDR) contacts ATP.

It belongs to the class-II aminoacyl-tRNA synthetase family. Type 1 subfamily. Homodimer.

Its subcellular location is the cytoplasm. It catalyses the reaction tRNA(Asp) + L-aspartate + ATP = L-aspartyl-tRNA(Asp) + AMP + diphosphate. In terms of biological role, catalyzes the attachment of L-aspartate to tRNA(Asp) in a two-step reaction: L-aspartate is first activated by ATP to form Asp-AMP and then transferred to the acceptor end of tRNA(Asp). The polypeptide is Aspartate--tRNA ligase (Streptococcus pyogenes serotype M1).